We begin with the raw amino-acid sequence, 373 residues long: Histidinol-phosphate aminotransferase 2 (373 aa).

N6-(pyridoxal phosphate)lysine is present on K229.

Belongs to the class-II pyridoxal-phosphate-dependent aminotransferase family. Histidinol-phosphate aminotransferase subfamily. Homodimer. The cofactor is pyridoxal 5'-phosphate.

It carries out the reaction L-histidinol phosphate + 2-oxoglutarate = 3-(imidazol-4-yl)-2-oxopropyl phosphate + L-glutamate. It functions in the pathway amino-acid biosynthesis; L-histidine biosynthesis; L-histidine from 5-phospho-alpha-D-ribose 1-diphosphate: step 7/9. This is Histidinol-phosphate aminotransferase 2 from Hydrogenovibrio crunogenus (strain DSM 25203 / XCL-2) (Thiomicrospira crunogena).